The following is a 287-amino-acid chain: Viomycin phosphotransferase (287 aa).

D190 functions as the Proton acceptor in the catalytic mechanism.

It belongs to the aminoglycoside phosphotransferase family.

It carries out the reaction viomycin + ATP = O-phosphoviomycin + ADP + H(+). Functionally, the aminoglycoside phosphotransferases achieve inactivation of their antibiotic substrates by phosphorylation. The sequence is that of Viomycin phosphotransferase (vph) from Streptomyces vinaceus.